Reading from the N-terminus, the 135-residue chain is MWMNFESLQIARAYLFGEVKYLDLMLVLNIIDIITGVIKAWKFKELRSRSAWFGYVRKMLSFLVVIVANAIDTIMDLNGVLTFATVLFYIANEGLSITENLAQIGVKIPAVITDRLHVIESDNDQKTEKDDQAAG.

The next 2 membrane-spanning stretches (helical) occupy residues 24–41 (LMLV…IKAW) and 62–84 (FLVV…LTFA).

Belongs to the bacteriophage holin family. Cp-1 holin subfamily.

The protein localises to the host membrane. Functionally, produces a lesion in the cytoplasmic membrane allowing the phage lysosyme to attack the peptidoglycan. The chain is Probable holin (45) from Bacillus phage phi105 (Bacteriophage phi-105).